Consider the following 205-residue polypeptide: Imidazole glycerol phosphate synthase subunit HisH (205 aa).

Residues 3–205 (KIGLIDYGMG…LLRRWLSNIQ (203 aa)) enclose the Glutamine amidotransferase type-1 domain. The active-site Nucleophile is the C81. Residues H185 and E187 contribute to the active site.

In terms of assembly, heterodimer of HisH and HisF.

It is found in the cytoplasm. It catalyses the reaction 5-[(5-phospho-1-deoxy-D-ribulos-1-ylimino)methylamino]-1-(5-phospho-beta-D-ribosyl)imidazole-4-carboxamide + L-glutamine = D-erythro-1-(imidazol-4-yl)glycerol 3-phosphate + 5-amino-1-(5-phospho-beta-D-ribosyl)imidazole-4-carboxamide + L-glutamate + H(+). It carries out the reaction L-glutamine + H2O = L-glutamate + NH4(+). Its pathway is amino-acid biosynthesis; L-histidine biosynthesis; L-histidine from 5-phospho-alpha-D-ribose 1-diphosphate: step 5/9. In terms of biological role, IGPS catalyzes the conversion of PRFAR and glutamine to IGP, AICAR and glutamate. The HisH subunit catalyzes the hydrolysis of glutamine to glutamate and ammonia as part of the synthesis of IGP and AICAR. The resulting ammonia molecule is channeled to the active site of HisF. This chain is Imidazole glycerol phosphate synthase subunit HisH, found in Prochlorococcus marinus (strain MIT 9312).